We begin with the raw amino-acid sequence, 494 residues long: UPF0371 protein SP_0341 (494 aa).

It belongs to the UPF0371 family.

The polypeptide is UPF0371 protein SP_0341 (Streptococcus pneumoniae serotype 4 (strain ATCC BAA-334 / TIGR4)).